The chain runs to 284 residues: Nucleotide-binding protein Sbal_3671 (284 aa).

8–15 contributes to the ATP binding site; the sequence is GRSGSGKS. 56–59 contacts GTP; it reads DVRN.

It belongs to the RapZ-like family.

Its function is as follows. Displays ATPase and GTPase activities. In Shewanella baltica (strain OS155 / ATCC BAA-1091), this protein is Nucleotide-binding protein Sbal_3671.